Here is a 377-residue protein sequence, read N- to C-terminus: MLSSRVRLVATTARLVHSLIYSSSRSFMDLKALLSSLNDFASLSFAESWDNVGLLVEPSPPHTVNTLFLTNDLTEEVMEEALQKKADLILSYHPPIFRPMKRITWKTWKERLVIRALENRVGIYSPHTAYDAAPQGVNNWLAKGLGVCTSRPIHPSKAPDYPTEGTHRVEFSVTHTQDPDKVISALKEIAGVSVTSFSARTDDEEQTRLSLNCTQQALMQVVAFLSQNRQFYQKTEILSLEKPLLLYTGMGRLCTLDESVSLETMIERIKSHLKLSHVRLALGIGKTLESPVKVVALCAGSGSSVLQGTDADLYLTGEMSHHDVLDAASQGISVILCEHSNTERGFLSDLRDMLDAHLENKINIILSETDRDPLHVI.

An N6-acetyllysine modification is found at Lys109. Residues 244-377 (LLLYTGMGRL…ETDRDPLHVI (134 aa)) are mediates interaction with COPS2. A Phosphothreonine modification is found at Thr255. Ser259 bears the Phosphoserine mark.

The protein belongs to the GTP cyclohydrolase I type 2/NIF3 family. As to quaternary structure, homodimer. Interacts with COPS2. Interacts with THOC7.

It localises to the cytoplasm. Its subcellular location is the nucleus. Its function is as follows. May function as a transcriptional corepressor through its interaction with COPS2, negatively regulating the expression of genes involved in neuronal differentiation. This chain is NIF3-like protein 1, found in Bos taurus (Bovine).